Consider the following 464-residue polypeptide: Argininosuccinate lyase (464 aa).

Belongs to the lyase 1 family. Argininosuccinate lyase subfamily.

It localises to the cytoplasm. The enzyme catalyses 2-(N(omega)-L-arginino)succinate = fumarate + L-arginine. Its pathway is amino-acid biosynthesis; L-arginine biosynthesis; L-arginine from L-ornithine and carbamoyl phosphate: step 3/3. The chain is Argininosuccinate lyase from Sulfurovum sp. (strain NBC37-1).